The primary structure comprises 348 residues: MMESRHAQRKNEHLSLAAKYYDQVHQHHYFDQVRLIHDSLPEMTTDDVDLHVQLADNLEIECPFYIEAMTGGSDQALKINRQLAQLAHKHHLAMATGSLSIISKDPQSFSSFEIIREENPDGIIFANLSANASLDQAINAISLLKANALELHINAAQELIMPEGDRDFNWLDNIQYLVSELEVPVIVKEVGFGMSKTTIAKLQTHDVHLINVSGRGGTNFAAIENRRNHDINFESLLDWGQTTPESLLEAHSIRRGKTEIIASGGITSPLDVIKAGVLGARAVGVAGYFLNILQNEGYEALDQTLGEWQVIVKRLLALLGCSSFTELSRVEYVLGTDLLSYARQRHLR.

9 to 10 (RK) contacts substrate. FMN contacts are provided by residues 68 to 70 (AMT), Ser-98, and Asn-127. Gln-157 serves as a coordination point for substrate. Residue Glu-158 coordinates Mg(2+). Residues Lys-188, Ser-213, Thr-218, and 286–287 (AG) contribute to the FMN site.

The protein belongs to the IPP isomerase type 2 family. Homooctamer. Dimer of tetramers. The cofactor is FMN. NADPH is required as a cofactor. Mg(2+) serves as cofactor.

Its subcellular location is the cytoplasm. It carries out the reaction isopentenyl diphosphate = dimethylallyl diphosphate. In terms of biological role, involved in the biosynthesis of isoprenoids. Catalyzes the 1,3-allylic rearrangement of the homoallylic substrate isopentenyl (IPP) to its allylic isomer, dimethylallyl diphosphate (DMAPP). This Limosilactobacillus reuteri subsp. reuteri (strain JCM 1112) (Lactobacillus reuteri) protein is Isopentenyl-diphosphate delta-isomerase.